A 325-amino-acid polypeptide reads, in one-letter code: Lipoyl synthase (325 aa).

[4Fe-4S] cluster-binding residues include Cys72, Cys77, Cys83, Cys98, Cys102, Cys105, and Ser312. The 218-residue stretch at Phe84–Lys301 folds into the Radical SAM core domain.

Belongs to the radical SAM superfamily. Lipoyl synthase family. It depends on [4Fe-4S] cluster as a cofactor.

The protein localises to the cytoplasm. The enzyme catalyses [[Fe-S] cluster scaffold protein carrying a second [4Fe-4S](2+) cluster] + N(6)-octanoyl-L-lysyl-[protein] + 2 oxidized [2Fe-2S]-[ferredoxin] + 2 S-adenosyl-L-methionine + 4 H(+) = [[Fe-S] cluster scaffold protein] + N(6)-[(R)-dihydrolipoyl]-L-lysyl-[protein] + 4 Fe(3+) + 2 hydrogen sulfide + 2 5'-deoxyadenosine + 2 L-methionine + 2 reduced [2Fe-2S]-[ferredoxin]. It participates in protein modification; protein lipoylation via endogenous pathway; protein N(6)-(lipoyl)lysine from octanoyl-[acyl-carrier-protein]: step 2/2. Functionally, catalyzes the radical-mediated insertion of two sulfur atoms into the C-6 and C-8 positions of the octanoyl moiety bound to the lipoyl domains of lipoate-dependent enzymes, thereby converting the octanoylated domains into lipoylated derivatives. The chain is Lipoyl synthase from Stutzerimonas stutzeri (strain A1501) (Pseudomonas stutzeri).